Consider the following 406-residue polypeptide: Leu/Ile/Val-binding protein homolog 5 (406 aa).

The N-terminal stretch at 1 to 29 (MIGTRLPAWTRVLACGVAGLSLMTISAKA) is a signal peptide.

This sequence belongs to the leucine-binding protein family.

Component of an amino-acid transport system. This Brucella abortus (strain 2308) protein is Leu/Ile/Val-binding protein homolog 5.